The chain runs to 219 residues: Ribonuclease T (219 aa).

The 175-residue stretch at 20–194 (VVIDIETAGF…YDSLQTANLF (175 aa)) folds into the Exonuclease domain. Positions 23, 25, 181, and 186 each coordinate Mg(2+). The Proton donor/acceptor role is filled by H181.

This sequence belongs to the RNase T family. In terms of assembly, homodimer. It depends on Mg(2+) as a cofactor.

In terms of biological role, trims short 3' overhangs of a variety of RNA species, leaving a one or two nucleotide 3' overhang. Responsible for the end-turnover of tRNA: specifically removes the terminal AMP residue from uncharged tRNA (tRNA-C-C-A). Also appears to be involved in tRNA biosynthesis. The sequence is that of Ribonuclease T from Buchnera aphidicola subsp. Schizaphis graminum (strain Sg).